A 218-amino-acid polypeptide reads, in one-letter code: Large ribosomal subunit protein uL3 (218 aa).

The interval 127–167 is disordered; it reads GFSRGPMSHGSKNHRLPGSIGAGTTPGRVYPGKRMAGRMGG.

The protein belongs to the universal ribosomal protein uL3 family. In terms of assembly, part of the 50S ribosomal subunit. Forms a cluster with proteins L14 and L19.

Its function is as follows. One of the primary rRNA binding proteins, it binds directly near the 3'-end of the 23S rRNA, where it nucleates assembly of the 50S subunit. The polypeptide is Large ribosomal subunit protein uL3 (Prochlorococcus marinus (strain NATL1A)).